A 122-amino-acid chain; its full sequence is uncharacterized protein (122 aa).

2 helical membrane passes run 36 to 56 (SVRS…YSQF) and 72 to 92 (AVFL…FSTD).

The protein resides in the membrane. This is an uncharacterized protein from Saccharomyces cerevisiae (strain ATCC 204508 / S288c) (Baker's yeast).